A 418-amino-acid polypeptide reads, in one-letter code: MTSTLPNASTPDPSSLQPAVRPGAHGRFGRFGGQYVPETLMPALAELEQAAAQAWNDPAFTDELNRLLKNYVGRATPLYEAERLTAHYRRADGGPRIWLKREDLNHTGAHKINNALGQALLALRMGKKRIIAETGAGQHGVATATVCARFGLECVIYMGAEDMRRQALNVFRMRLLGATVQPVTAGTATLKDATSEAIRDWVTNVETTHYILGSVAGPHPYPMLVRDFHAVIGEESKQQCQEAFGRLPDVLMACVGGGSNAMGLFHPFVQDMSVRLIGVEAAGDGVASGRHAATITEGRAGVLHGAMSLLLQDGDGQVMEAHSISAGLDYPGVGPEHSYLREIGRAEYAAVTDQQALDALRLVSELEGIIPALETAHAFAWLEQLCPTLADGTEVVINCSGRGDKDVNTVAEKLGDQL.

Over residues 1-17 (MTSTLPNASTPDPSSLQ) the composition is skewed to polar residues. Residues 1 to 23 (MTSTLPNASTPDPSSLQPAVRPG) form a disordered region. An N6-(pyridoxal phosphate)lysine modification is found at lysine 111.

It belongs to the TrpB family. Tetramer of two alpha and two beta chains. Requires pyridoxal 5'-phosphate as cofactor.

It carries out the reaction (1S,2R)-1-C-(indol-3-yl)glycerol 3-phosphate + L-serine = D-glyceraldehyde 3-phosphate + L-tryptophan + H2O. The protein operates within amino-acid biosynthesis; L-tryptophan biosynthesis; L-tryptophan from chorismate: step 5/5. In terms of biological role, the beta subunit is responsible for the synthesis of L-tryptophan from indole and L-serine. The sequence is that of Tryptophan synthase beta chain from Synechococcus sp. (strain CC9605).